The chain runs to 120 residues: Small ribosomal subunit protein bS16 (120 aa).

Residues 84-110 (KREVKSNPEKAKPGKRAQERAAEKAQK) show a composition bias toward basic and acidic residues. Residues 84 to 120 (KREVKSNPEKAKPGKRAQERAAEKAQKAADAAAATAE) form a disordered region. Residues 111-120 (AADAAAATAE) show a composition bias toward low complexity.

It belongs to the bacterial ribosomal protein bS16 family.

The protein is Small ribosomal subunit protein bS16 of Rhizobium rhizogenes (strain K84 / ATCC BAA-868) (Agrobacterium radiobacter).